Reading from the N-terminus, the 617-residue chain is uncharacterized protein (617 aa).

Over residues 387-396 (NGGMSATQLP) the composition is skewed to polar residues. Disordered stretches follow at residues 387 to 419 (NGGM…HAAP) and 443 to 599 (YDDF…NNEQ). A compositionally biased stretch (low complexity) spans 404–414 (RQAAANQFQQR). Over residues 453-474 (QPLTQQQKDAARQRYQSASPEQ) the composition is skewed to polar residues. Basic and acidic residues-rich tracts occupy residues 490 to 499 (QRREAARERI) and 522 to 531 (QRRDAARERI). A compositionally biased stretch (polar residues) spans 549–570 (RPLNQQQRDNARQRVQSASPEQ). Positions 572–585 (QVFREKVQESRPQR) are enriched in basic and acidic residues. The span at 586–599 (LNDSNHTVRLNNEQ) shows a compositional bias: polar residues.

This is an uncharacterized protein from Escherichia coli (strain K12).